The chain runs to 62 residues: Synergistic-type venom protein C8S2, chain 1 (62 aa).

Disulfide bonds link C3–C24, C17–C42, and C46–C57.

It belongs to the three-finger toxin family. Short-chain subfamily. Aminergic toxin sub-subfamily. Heterodimer of C8S2 chain 1 and chain 2 (AC P01411); disulfide-linked. In terms of tissue distribution, expressed by the venom gland.

The protein localises to the secreted. In terms of biological role, this protein shows a synergetic toxic effect in that it enhances the toxicity of other toxins. The protein is Synergistic-type venom protein C8S2, chain 1 of Dendroaspis angusticeps (Eastern green mamba).